The following is a 558-amino-acid chain: Transcription factor RelB (558 aa).

Basic and acidic residues predominate over residues 1-11; it reads MPSRRAARESA. A disordered region spans residues 1–21; that stretch reads MPSRRAARESAPELGALGSSD. Position 19 is a phosphoserine (Ser19). Residues 22 to 50 form a leucine-zipper region; that stretch reads LSSLSLTVSRTTDELEIIDEYIKENGFGL. Thr84 carries the phosphothreonine modification. In terms of domain architecture, RHD spans 103–418; that stretch reads PYLVITEQPK…ESKRRKKKPV (316 aa). Short sequence motifs (nuclear localization signal) lie at residues 387-391 and 411-416; these read KKRKR and KRRKKK. The residue at position 552 (Ser552) is a Phosphoserine.

In terms of assembly, component of the NF-kappa-B RelB-p50 complex. Component of the NF-kappa-B RelB-p52 complex. Self-associates; the interaction seems to be transient and may prevent degradation allowing for heterodimer formation p50 or p52. Interacts with NFKB1/p50, NFKB2/p52 and NFKB2/p100. Interacts with NFKBID. Interacts with BMAL1 and the interaction is enhanced in the presence of CLOCK. Post-translationally, phosphorylation at 'Thr-103' and 'Ser-573' is followed by proteasomal degradation. As to expression, expressed in intestine, thymus and spleen. Undetectable in liver, bome marrow, kidney and testis.

The protein localises to the nucleus. The protein resides in the cytoplasm. It localises to the cytoskeleton. Its subcellular location is the microtubule organizing center. It is found in the centrosome. In terms of biological role, NF-kappa-B is a pleiotropic transcription factor which is present in almost all cell types and is involved in many biological processed such as inflammation, immunity, differentiation, cell growth, tumorigenesis and apoptosis. NF-kappa-B is a homo- or heterodimeric complex formed by the Rel-like domain-containing proteins RELA/p65, RELB, NFKB1/p105, NFKB1/p50, REL and NFKB2/p52. The dimers bind at kappa-B sites in the DNA of their target genes and the individual dimers have distinct preferences for different kappa-B sites that they can bind with distinguishable affinity and specificity. Different dimer combinations act as transcriptional activators or repressors, respectively. NF-kappa-B is controlled by various mechanisms of post-translational modification and subcellular compartmentalization as well as by interactions with other cofactors or corepressors. NF-kappa-B complexes are held in the cytoplasm in an inactive state complexed with members of the NF-kappa-B inhibitor (I-kappa-B) family. In a conventional activation pathway, I-kappa-B is phosphorylated by I-kappa-B kinases (IKKs) in response to different activators, subsequently degraded thus liberating the active NF-kappa-B complex which translocates to the nucleus. NF-kappa-B heterodimeric RelB-p50 and RelB-p52 complexes are transcriptional activators. RELB neither associates with DNA nor with RELA/p65 or REL. Stimulates promoter activity in the presence of NFKB2/p49. As a member of the NUPR1/RELB/IER3 survival pathway, may allow the development of pancreatic intraepithelial neoplasias. Regulates the circadian clock by repressing the transcriptional activator activity of the CLOCK-BMAL1 heterodimer in a CRY1/CRY2 independent manner. Increased repression of the heterodimer is seen in the presence of NFKB2/p52. Is required for both T and B lymphocyte maturation and function. This Mus musculus (Mouse) protein is Transcription factor RelB (Relb).